The sequence spans 533 residues: CTP synthase (533 aa).

The amidoligase domain stretch occupies residues 1 to 268 (MGETKYIFVT…DETILQKMGL (268 aa)). CTP is bound at residue S15. S15 lines the UTP pocket. Position 16-21 (16-21 (SLGKGI)) interacts with ATP. Y56 lines the L-glutamine pocket. An ATP-binding site is contributed by D73. Residues D73 and E143 each coordinate Mg(2+). Residues 150 to 152 (DIE), 189 to 194 (KTKPTQ), and K225 each bind CTP. UTP-binding positions include 189–194 (KTKPTQ) and K225. A Glutamine amidotransferase type-1 domain is found at 301 to 533 (YVELQDAYKS…VSFIKAAIDK (233 aa)). G356 contributes to the L-glutamine binding site. Residue C383 is the Nucleophile; for glutamine hydrolysis of the active site. Residues 384–387 (LGMQ), E407, and R464 contribute to the L-glutamine site. Active-site residues include H509 and E511.

Belongs to the CTP synthase family. As to quaternary structure, homotetramer.

It catalyses the reaction UTP + L-glutamine + ATP + H2O = CTP + L-glutamate + ADP + phosphate + 2 H(+). The enzyme catalyses L-glutamine + H2O = L-glutamate + NH4(+). The catalysed reaction is UTP + NH4(+) + ATP = CTP + ADP + phosphate + 2 H(+). Its pathway is pyrimidine metabolism; CTP biosynthesis via de novo pathway; CTP from UDP: step 2/2. Its activity is regulated as follows. Allosterically activated by GTP, when glutamine is the substrate; GTP has no effect on the reaction when ammonia is the substrate. The allosteric effector GTP functions by stabilizing the protein conformation that binds the tetrahedral intermediate(s) formed during glutamine hydrolysis. Inhibited by the product CTP, via allosteric rather than competitive inhibition. Catalyzes the ATP-dependent amination of UTP to CTP with either L-glutamine or ammonia as the source of nitrogen. Regulates intracellular CTP levels through interactions with the four ribonucleotide triphosphates. The sequence is that of CTP synthase from Bacteroides fragilis (strain YCH46).